The following is a 445-amino-acid chain: Exodeoxyribonuclease 7 large subunit (445 aa).

Belongs to the XseA family. In terms of assembly, heterooligomer composed of large and small subunits.

The protein resides in the cytoplasm. It catalyses the reaction Exonucleolytic cleavage in either 5'- to 3'- or 3'- to 5'-direction to yield nucleoside 5'-phosphates.. In terms of biological role, bidirectionally degrades single-stranded DNA into large acid-insoluble oligonucleotides, which are then degraded further into small acid-soluble oligonucleotides. The polypeptide is Exodeoxyribonuclease 7 large subunit (Limosilactobacillus reuteri (strain DSM 20016) (Lactobacillus reuteri)).